The primary structure comprises 175 residues: MAAVSMSVVLRQTLWRRRAVAVAALSVSRVPTRSLRTSTWRLAQDQTQDTQLITVDEKLDITTLTGVPEEHIKTRKVRIFVPARNNMQSGVNNTKKWKMEFDTRERWENPLMGWASTADPLSNMVLTFSTKEDAVSFAEKNGWSYDIEERKVPKPKSKSYGANFSWNKRTRVSTK.

The N-terminal 42 residues, 1–42, are a transit peptide targeting the mitochondrion; that stretch reads MAAVSMSVVLRQTLWRRRAVAVAALSVSRVPTRSLRTSTWRL. Positions 151–175 are disordered; the sequence is KVPKPKSKSYGANFSWNKRTRVSTK. The residue at position 173 (S173) is a Phosphoserine; by PKA.

The protein belongs to the complex I NDUFS4 subunit family. As to quaternary structure, mammalian complex I is composed of 45 different subunits. This is a component of the iron-sulfur (IP) fragment of the enzyme. Interacts with BCAP31 and TOMM40; the interaction mediates its translocation to the mitochondria; the interaction with BCAP31 is direct.

It is found in the mitochondrion inner membrane. Accessory subunit of the mitochondrial membrane respiratory chain NADH dehydrogenase (Complex I), that is believed not to be involved in catalysis. Complex I functions in the transfer of electrons from NADH to the respiratory chain. The immediate electron acceptor for the enzyme is believed to be ubiquinone. The polypeptide is NADH dehydrogenase [ubiquinone] iron-sulfur protein 4, mitochondrial (NDUFS4) (Homo sapiens (Human)).